The chain runs to 286 residues: General stress protein A (286 aa).

Residues 12–17 (CADDNY) and 111–112 (DC) each bind UDP. Mn(2+) contacts are provided by aspartate 111, aspartate 113, and histidine 247. 247–253 (HFCGGEK) lines the UDP pocket.

The protein belongs to the glycosyltransferase 8 family.

The polypeptide is General stress protein A (gspA) (Bacillus subtilis (strain 168)).